Here is a 152-residue protein sequence, read N- to C-terminus: Ubiquitin-activating enzyme E1 Y (152 aa).

The Glycyl thioester intermediate role is filled by Cys51.

Belongs to the ubiquitin-activating E1 family. Monomer.

The enzyme catalyses ATP + ubiquitin + [E1 ubiquitin-activating enzyme]-L-cysteine = AMP + diphosphate + S-ubiquitinyl-[E1 ubiquitin-activating enzyme]-L-cysteine.. The protein operates within protein modification; protein ubiquitination. Functionally, activates ubiquitin by first adenylating its C-terminal glycine residue with ATP, and thereafter linking this residue to the side chain of a cysteine residue in E1, yielding a ubiquitin-E1 thioester and free AMP. The Y chromosome form could be involved in the survival and proliferation of differentiating spermatogonia. In Osphranter rufus (Red kangaroo), this protein is Ubiquitin-activating enzyme E1 Y (UBE1Y).